A 119-amino-acid chain; its full sequence is Protein GSKIP homolog (119 aa).

It belongs to the GSKIP family.

This Drosophila melanogaster (Fruit fly) protein is Protein GSKIP homolog.